We begin with the raw amino-acid sequence, 436 residues long: UPF0597 protein YhaM (436 aa).

Belongs to the UPF0597 family.

The chain is UPF0597 protein YhaM from Salmonella dublin (strain CT_02021853).